Reading from the N-terminus, the 169-residue chain is uncharacterized protein (169 aa).

Helical transmembrane passes span 25–45, 57–77, and 91–111; these read ALMG…MSYF, FFWV…FGVF, and LFLI…FLMV.

The protein belongs to the major facilitator superfamily. Allantoate permease family.

The protein resides in the membrane. This is an uncharacterized protein from Saccharomyces cerevisiae (strain ATCC 204508 / S288c) (Baker's yeast).